Reading from the N-terminus, the 207-residue chain is Transcription antitermination protein NusB (207 aa).

Belongs to the NusB family.

Functionally, involved in transcription antitermination. Required for transcription of ribosomal RNA (rRNA) genes. Binds specifically to the boxA antiterminator sequence of the ribosomal RNA (rrn) operons. In Trichodesmium erythraeum (strain IMS101), this protein is Transcription antitermination protein NusB.